Here is a 390-residue protein sequence, read N- to C-terminus: Chorismate synthase 2 (390 aa).

Arginine 39 and arginine 45 together coordinate NADP(+). FMN is bound by residues 132 to 134 (RSS), 253 to 254 (NA), glycine 298, 313 to 317 (KPIPT), and arginine 339.

Belongs to the chorismate synthase family. As to quaternary structure, homotetramer. Requires FMNH2 as cofactor.

It catalyses the reaction 5-O-(1-carboxyvinyl)-3-phosphoshikimate = chorismate + phosphate. The protein operates within metabolic intermediate biosynthesis; chorismate biosynthesis; chorismate from D-erythrose 4-phosphate and phosphoenolpyruvate: step 7/7. Functionally, catalyzes the anti-1,4-elimination of the C-3 phosphate and the C-6 proR hydrogen from 5-enolpyruvylshikimate-3-phosphate (EPSP) to yield chorismate, which is the branch point compound that serves as the starting substrate for the three terminal pathways of aromatic amino acid biosynthesis. This reaction introduces a second double bond into the aromatic ring system. The sequence is that of Chorismate synthase 2 from Bacillus cereus (strain ATCC 14579 / DSM 31 / CCUG 7414 / JCM 2152 / NBRC 15305 / NCIMB 9373 / NCTC 2599 / NRRL B-3711).